A 141-amino-acid chain; its full sequence is Pheromone-binding protein-related protein 6 (141 aa).

The N-terminal stretch at 1–16 is a signal peptide; it reads MVKYPLILLLIGCAAA. Cystine bridges form between Cys41-Cys72, Cys68-Cys120, and Cys111-Cys129.

The protein belongs to the PBP/GOBP family. Antenna. Mostly expressed in two types of sensory hairs, sensilla trichodea and small sensilla basiconica, in the ventro-lateral region of the third antennal segment (at protein level).

Its subcellular location is the secreted. This Drosophila melanogaster (Fruit fly) protein is Pheromone-binding protein-related protein 6 (Obp83b).